Reading from the N-terminus, the 744-residue chain is MAKREDSPGPEVQPMDKQFLVCSICLDRYRCPKVLPCLHTFCERCLQNYIPPQSLTLSCPVCRQTSILPEQGVSALQNNFFISSLMEAMQQAPEGAHDPEDPHPLSAVAGRPLSCPNHEGKTMEFYCEACETAMCGECRAGEHREHGTVLLRDVVEQHKAALQRQLEAVRGRLPQLSAAIALVGGISQQLQERKAEALAQISAAFEDLEQALQQRKQALVSDLESICGAKQKVLQTQLDTLRQGQEHIGSSCSFAEQALRLGSAPEVLLVRKHMRERLAALAAQAFPERPHENAQLELVLEVDGLRRSVLNLGALLTTSATAHETVATGEGLRQALVGQPASLTVTTKDKDGRLVRTGSAELCAEITGPDGVRLAVPVVDHKNGTYELVYTARTEGDLLLSVLLYGQPVRGSPFRVRALRPGDLPPSPDDVKRRVKSPGGPGSHVRQKAVRRPSSMYSTGGKRKDNPIEDELVFRVGSRGREKGEFTNLQGVSAASSGRIVVADSNNQCIQVFSNEGQFKFRFGVRGRSPGQLQRPTGVAVDTNGDIIVADYDNRWVSIFSPEGKFKTKIGAGRLMGPKGVAVDRNGHIIVVDNKSCCVFTFQPNGKLVGRFGGRGATDRHFAGPHFVAVNNKNEIVVTDFHNHSVKVYSADGEFLFKFGSHGEGNGQFNAPTGVAVDSNGNIIVADWGNSRIQVFDSSGSFLSYINTSAEPLYGPQGLALTSDGHVVVADAGNHCFKAYRYLQ.

N-acetylalanine is present on Ala2. Residues 2–290 (AKREDSPGPE…LAAQAFPERP (289 aa)) form an interaction with KIF21B region. Ser7 is modified (phosphoserine). The RING-type zinc finger occupies 22–63 (CSICLDRYRCPKVLPCLHTFCERCLQNYIPPQSLTLSCPVCR). The B box-type zinc finger occupies 110 to 151 (GRPLSCPNHEGKTMEFYCEACETAMCGECRAGEHREHGTVLL). The Zn(2+) site is built by Cys115, His118, Cys138, and His143. Residues 153–224 (DVVEQHKAAL…RKQALVSDLE (72 aa)) adopt a coiled-coil conformation. A Filamin repeat occupies 317-418 (TTSATAHETV…VRGSPFRVRA (102 aa)). A disordered region spans residues 419–464 (LRPGDLPPSPDDVKRRVKSPGGPGSHVRQKAVRRPSSMYSTGGKRK). The residue at position 427 (Ser427) is a Phosphoserine. NHL repeat units follow at residues 473 to 516 (VFRV…FSNE), 520 to 563 (KFRF…FSPE), 564 to 605 (GKFK…FQPN), 609 to 652 (VGRF…YSAD), 656 to 699 (LFKF…FDSS), and 700 to 743 (GSFL…YRYL).

Belongs to the TRIM/RBCC family. As to quaternary structure, forms homooligomers. Interacts with TRIM2; this interaction reduces TRIM2 activity. Associates with myosin-Vb (MYO5B) and alpha-actinin-4 (ACTN4). Component of the CART complex, at least composed of ACTN4, HGS/HRS, MYO5B and TRIM3. Interacts with ZFYVE28/LST2. Interacts with KIF21B.

Its subcellular location is the cytoplasm. The protein localises to the early endosome. It localises to the golgi apparatus. The protein resides in the trans-Golgi network. It is found in the cell projection. Its subcellular location is the dendrite. The catalysed reaction is S-ubiquitinyl-[E2 ubiquitin-conjugating enzyme]-L-cysteine + [acceptor protein]-L-lysine = [E2 ubiquitin-conjugating enzyme]-L-cysteine + N(6)-ubiquitinyl-[acceptor protein]-L-lysine.. Its function is as follows. E3 ubiquitin ligase that plays essential roles in neuronal functions such as regulation of neuronal plasticity, learning, and memory. In addition to its neuronal functions, participates in other biological processes such as innate immunity or cell cycle regulation. Component of the cytoskeleton-associated recycling or transport complex in neurons, polyubiquitinates gamma-actin, thus regulating neuronal plasticity, learning, and memory. Ubiquitinates postsynaptic scaffold GKAP, a neuronal substrate involved in synaptic remodeling and thereby modulates dendritic spine morphology. Positively regulates motility of microtubule-dependent motor protein KIF21B. Induces growth arrest via its RING-dependent E3 ligase activity and ubiquinates CDKN1A. Positively regulates TLR3-mediated signaling by mediating 'Lys-63'-linked polyubiquitination of TLR3. In turn, promotes the recognition and sorting of polyubiquitinated TLR3 by the ESCRT complexes. The chain is Tripartite motif-containing protein 3 (Trim3) from Mus musculus (Mouse).